The primary structure comprises 308 residues: MTEHPEQQYLDAMARAWYGGDERVDRTGVGTKSLFGVTMRFDLSDGTVPLITTKKIFWKSAIKELIWFLSGDTNIRPLVMQNVHIWTDWPLDKYRKATGEAIDRDAFERRIVDDPAFAAEWGDLGPVYGKQWVDWPRYTPAGDGLFRREEKGVNQIAELVGMLRANPSSRRLIFTGWNVPELPGMALPPCHMTYQYHVAGGRLSGILYQRSCDLGLGFPFNIFEAAVLIRMLAQQADLEPGELVWMGADTHVYSNHGHLVEEQLSRSPRPFPRLSLARKPADMFSYALDDFVIEGYDPHPHIKAEVAV.

Residues Arg-26 and 170–171 (RR) contribute to the dUMP site. Catalysis depends on Cys-190, which acts as the Nucleophile. DUMP-binding positions include 210–213 (RSCD), Asn-221, and 251–253 (HVY). (6R)-5,10-methylene-5,6,7,8-tetrahydrofolate is bound at residue Asp-213. Residue Ala-307 participates in (6R)-5,10-methylene-5,6,7,8-tetrahydrofolate binding.

The protein belongs to the thymidylate synthase family. Bacterial-type ThyA subfamily. Homodimer.

The protein localises to the cytoplasm. The catalysed reaction is dUMP + (6R)-5,10-methylene-5,6,7,8-tetrahydrofolate = 7,8-dihydrofolate + dTMP. Its pathway is pyrimidine metabolism; dTTP biosynthesis. Functionally, catalyzes the reductive methylation of 2'-deoxyuridine-5'-monophosphate (dUMP) to 2'-deoxythymidine-5'-monophosphate (dTMP) while utilizing 5,10-methylenetetrahydrofolate (mTHF) as the methyl donor and reductant in the reaction, yielding dihydrofolate (DHF) as a by-product. This enzymatic reaction provides an intracellular de novo source of dTMP, an essential precursor for DNA biosynthesis. The chain is Thymidylate synthase from Rhizorhabdus wittichii (strain DSM 6014 / CCUG 31198 / JCM 15750 / NBRC 105917 / EY 4224 / RW1) (Sphingomonas wittichii).